The sequence spans 384 residues: Chorismate synthase (384 aa).

NADP(+)-binding residues include Arg39 and Arg45. Residues 130 to 132 (RSS), 248 to 249 (NA), Gly292, 307 to 311 (KPIPT), and Arg333 contribute to the FMN site.

The protein belongs to the chorismate synthase family. As to quaternary structure, homotetramer. Requires FMNH2 as cofactor.

It carries out the reaction 5-O-(1-carboxyvinyl)-3-phosphoshikimate = chorismate + phosphate. It participates in metabolic intermediate biosynthesis; chorismate biosynthesis; chorismate from D-erythrose 4-phosphate and phosphoenolpyruvate: step 7/7. Functionally, catalyzes the anti-1,4-elimination of the C-3 phosphate and the C-6 proR hydrogen from 5-enolpyruvylshikimate-3-phosphate (EPSP) to yield chorismate, which is the branch point compound that serves as the starting substrate for the three terminal pathways of aromatic amino acid biosynthesis. This reaction introduces a second double bond into the aromatic ring system. The sequence is that of Chorismate synthase from Exiguobacterium sibiricum (strain DSM 17290 / CCUG 55495 / CIP 109462 / JCM 13490 / 255-15).